A 100-amino-acid chain; its full sequence is Small ribosomal subunit protein uS14c (100 aa).

The protein belongs to the universal ribosomal protein uS14 family. Part of the 30S ribosomal subunit.

Its subcellular location is the plastid. It localises to the chloroplast. In terms of biological role, binds 16S rRNA, required for the assembly of 30S particles. In Buxus microphylla (Littleleaf boxwood), this protein is Small ribosomal subunit protein uS14c.